The chain runs to 320 residues: Probable arabinan endo-1,5-alpha-L-arabinosidase C (320 aa).

A signal peptide spans 1–16; sequence MYRSTLLFLFIALVNA. The active-site Proton acceptor is the Asp31. 3 N-linked (GlcNAc...) asparagine glycosylation sites follow: Asn73, Asn137, and Asn191. Glu199 serves as the catalytic Proton donor.

This sequence belongs to the glycosyl hydrolase 43 family.

It is found in the secreted. It carries out the reaction Endohydrolysis of (1-&gt;5)-alpha-arabinofuranosidic linkages in (1-&gt;5)-arabinans.. It participates in glycan metabolism; L-arabinan degradation. Its function is as follows. Endo-1,5-alpha-L-arabinanase involved in degradation of pectin. Its preferred substrate is linear 1,5-alpha-L-arabinan. This is Probable arabinan endo-1,5-alpha-L-arabinosidase C (abnC) from Aspergillus terreus (strain NIH 2624 / FGSC A1156).